Consider the following 418-residue polypeptide: Gamma-glutamyl phosphate reductase (418 aa).

It belongs to the gamma-glutamyl phosphate reductase family.

The protein resides in the cytoplasm. It carries out the reaction L-glutamate 5-semialdehyde + phosphate + NADP(+) = L-glutamyl 5-phosphate + NADPH + H(+). The protein operates within amino-acid biosynthesis; L-proline biosynthesis; L-glutamate 5-semialdehyde from L-glutamate: step 2/2. Functionally, catalyzes the NADPH-dependent reduction of L-glutamate 5-phosphate into L-glutamate 5-semialdehyde and phosphate. The product spontaneously undergoes cyclization to form 1-pyrroline-5-carboxylate. The sequence is that of Gamma-glutamyl phosphate reductase from Halothermothrix orenii (strain H 168 / OCM 544 / DSM 9562).